Consider the following 430-residue polypeptide: Mucorpepsin (430 aa).

Positions 1 to 22 are cleaved as a signal peptide; the sequence is MLFSQITSAILLTAASLSLTTA. Residues 23 to 69 constitute a propeptide, activation peptide; it reads RPVSKQSESKDKLLALPLTSVSRKFSQTKFGQQQLAEKLAGLKPFSE. A Peptidase A1 domain is found at 89 to 421; that stretch reads YAIPVSIGTP…DFGNNRIGFA (333 aa). Residue Asp107 is part of the active site. A disulfide bridge connects residues Cys120 and Cys126. N-linked (GlcNAc...) asparagine glycosylation is found at Asn148 and Asn257. The active site involves Asp306. Cys341 and Cys385 are joined by a disulfide.

The protein belongs to the peptidase A1 family.

The catalysed reaction is Hydrolysis of proteins, favoring hydrophobic residues at P1 and P1'. Clots milk. Does not accept Lys at P1, and hence does not activate trypsinogen.. Its function is as follows. This enzyme, capable of clotting milk is frequently used for cheese production. The sequence is that of Mucorpepsin from Rhizomucor miehei.